The primary structure comprises 199 residues: Pectinesterase inhibitor 4 (199 aa).

Positions M1–A25 are cleaved as a signal peptide. N-linked (GlcNAc...) asparagine glycans are attached at residues N16, N33, N43, and N83. C42 and C51 are disulfide-bonded. Residues C109 and C158 are joined by a disulfide bond.

It belongs to the PMEI family. Binds reversibly to PME3 to inhibit its activity; the stability of the PME3-PMEI4 complex and the inhibition of the pectin methylesterase (PME) activity is pH-dependent, based on protonation status of amino-acids at the complex interface. In terms of tissue distribution, expressed in outer cell layer of roots, particularly in the root-hair zone. Expressed in roots and siliques.

Its subcellular location is the secreted. It localises to the extracellular space. The protein localises to the apoplast. Its function is as follows. Pectin methylesterase (PME) inhibitor that can target the root-expressed PME17 and PME3 in a pH-dependent manner, mainly in slightly acidic conditions (pH 6.3 and 5.0) but not at pH 7.5; this processus relies on changes in the protonation of amino acids involved in intermolecular and intramolecular interactions. Regulate de-methylesterification of pectins in roots and affects root growth. The chain is Pectinesterase inhibitor 4 from Arabidopsis thaliana (Mouse-ear cress).